The primary structure comprises 840 residues: Probable alpha-glucuronidase A (840 aa).

Residues 1–19 (MWSGIPVFALLSSIGIAAA) form the signal peptide. Residues Asn-50, Asn-149, Asn-222, Asn-262, Asn-279, Asn-310, Asn-465, Asn-527, Asn-576, Asn-610, Asn-682, Asn-723, and Asn-732 are each glycosylated (N-linked (GlcNAc...) asparagine).

This sequence belongs to the glycosyl hydrolase 67 family.

The protein resides in the secreted. The catalysed reaction is an alpha-D-glucuronoside + H2O = D-glucuronate + an alcohol. Its function is as follows. Alpha-glucuronidase involved in the hydrolysis of xylan, a major structural heterogeneous polysaccharide found in plant biomass representing the second most abundant polysaccharide in the biosphere, after cellulose. Releases 4-O-methylglucuronic acid from xylan. The protein is Probable alpha-glucuronidase A (aguA) of Neosartorya fischeri (strain ATCC 1020 / DSM 3700 / CBS 544.65 / FGSC A1164 / JCM 1740 / NRRL 181 / WB 181) (Aspergillus fischerianus).